We begin with the raw amino-acid sequence, 430 residues long: Enolase (430 aa).

Gln164 serves as a coordination point for (2R)-2-phosphoglycerate. Residue Glu208 is the Proton donor of the active site. Mg(2+) contacts are provided by Asp245, Glu288, and Asp315. Residues Lys340, Arg369, Ser370, and Lys391 each coordinate (2R)-2-phosphoglycerate. The Proton acceptor role is filled by Lys340.

It belongs to the enolase family. Mg(2+) serves as cofactor.

Its subcellular location is the cytoplasm. The protein resides in the secreted. The protein localises to the cell surface. It carries out the reaction (2R)-2-phosphoglycerate = phosphoenolpyruvate + H2O. It functions in the pathway carbohydrate degradation; glycolysis; pyruvate from D-glyceraldehyde 3-phosphate: step 4/5. In terms of biological role, catalyzes the reversible conversion of 2-phosphoglycerate (2-PG) into phosphoenolpyruvate (PEP). It is essential for the degradation of carbohydrates via glycolysis. This is Enolase from Pyrococcus furiosus (strain ATCC 43587 / DSM 3638 / JCM 8422 / Vc1).